Consider the following 269-residue polypeptide: Imidazole glycerol phosphate synthase subunit HisF (269 aa).

Catalysis depends on residues D23 and D142.

Belongs to the HisA/HisF family. As to quaternary structure, heterodimer of HisH and HisF.

Its subcellular location is the cytoplasm. It catalyses the reaction 5-[(5-phospho-1-deoxy-D-ribulos-1-ylimino)methylamino]-1-(5-phospho-beta-D-ribosyl)imidazole-4-carboxamide + L-glutamine = D-erythro-1-(imidazol-4-yl)glycerol 3-phosphate + 5-amino-1-(5-phospho-beta-D-ribosyl)imidazole-4-carboxamide + L-glutamate + H(+). Its pathway is amino-acid biosynthesis; L-histidine biosynthesis; L-histidine from 5-phospho-alpha-D-ribose 1-diphosphate: step 5/9. Functionally, IGPS catalyzes the conversion of PRFAR and glutamine to IGP, AICAR and glutamate. The HisF subunit catalyzes the cyclization activity that produces IGP and AICAR from PRFAR using the ammonia provided by the HisH subunit. In Bordetella parapertussis (strain 12822 / ATCC BAA-587 / NCTC 13253), this protein is Imidazole glycerol phosphate synthase subunit HisF.